The primary structure comprises 130 residues: Ribosome-binding factor A (130 aa).

It belongs to the RbfA family. As to quaternary structure, monomer. Binds 30S ribosomal subunits, but not 50S ribosomal subunits or 70S ribosomes.

The protein resides in the cytoplasm. Its function is as follows. One of several proteins that assist in the late maturation steps of the functional core of the 30S ribosomal subunit. Associates with free 30S ribosomal subunits (but not with 30S subunits that are part of 70S ribosomes or polysomes). Required for efficient processing of 16S rRNA. May interact with the 5'-terminal helix region of 16S rRNA. This Alkalilimnicola ehrlichii (strain ATCC BAA-1101 / DSM 17681 / MLHE-1) protein is Ribosome-binding factor A.